The primary structure comprises 619 residues: 1-deoxy-D-xylulose-5-phosphate synthase (619 aa).

Thiamine diphosphate contacts are provided by residues H74 and 115–117 (GHS). A Mg(2+)-binding site is contributed by D146. Thiamine diphosphate-binding positions include 147–148 (GA), N175, and Y285. Position 175 (N175) interacts with Mg(2+). Residues 289-312 (EKSPSKYHAVPPRANEKEKPSKPC) are disordered. The span at 302–312 (ANEKEKPSKPC) shows a compositional bias: basic and acidic residues. E365 serves as a coordination point for thiamine diphosphate.

It belongs to the transketolase family. DXPS subfamily. In terms of assembly, homodimer. Mg(2+) serves as cofactor. It depends on thiamine diphosphate as a cofactor.

The enzyme catalyses D-glyceraldehyde 3-phosphate + pyruvate + H(+) = 1-deoxy-D-xylulose 5-phosphate + CO2. It participates in metabolic intermediate biosynthesis; 1-deoxy-D-xylulose 5-phosphate biosynthesis; 1-deoxy-D-xylulose 5-phosphate from D-glyceraldehyde 3-phosphate and pyruvate: step 1/1. In terms of biological role, catalyzes the acyloin condensation reaction between C atoms 2 and 3 of pyruvate and glyceraldehyde 3-phosphate to yield 1-deoxy-D-xylulose-5-phosphate (DXP). In Clostridium botulinum (strain Eklund 17B / Type B), this protein is 1-deoxy-D-xylulose-5-phosphate synthase.